Reading from the N-terminus, the 250-residue chain is tRNA (guanine-N(1)-)-methyltransferase (250 aa).

S-adenosyl-L-methionine-binding positions include Gly115 and 135-140 (LGDFVL).

This sequence belongs to the RNA methyltransferase TrmD family. As to quaternary structure, homodimer.

The protein resides in the cytoplasm. The enzyme catalyses guanosine(37) in tRNA + S-adenosyl-L-methionine = N(1)-methylguanosine(37) in tRNA + S-adenosyl-L-homocysteine + H(+). Functionally, specifically methylates guanosine-37 in various tRNAs. This chain is tRNA (guanine-N(1)-)-methyltransferase, found in Legionella pneumophila subsp. pneumophila (strain Philadelphia 1 / ATCC 33152 / DSM 7513).